A 357-amino-acid chain; its full sequence is Dynein axonemal assembly factor 10 (357 aa).

WD repeat units lie at residues 63 to 105, 115 to 154, 162 to 205, 207 to 249, 257 to 297, and 319 to 357; these read EKAK…MPVY, NAID…DPVA, ENKR…LRWE, NIKN…PTKG, AHKS…QRSK, and LSTQ…LNKI.

In terms of assembly, component of the PAQosome complex which is responsible for the biogenesis of several protein complexes and which consists of R2TP complex members RUVBL1, RUVBL2, RPAP3 and PIH1D1, URI complex members PFDN2, PFDN6, PDRG1, UXT and URI1 as well as ASDURF, POLR2E and DNAAF10/WDR92. Interacts with PIH1D1; the interaction associates DNAAF10 with the R2TP complex. Interacts with several dynein axonemal assembly factors. Widely expressed with the highest expression in testis.

The protein resides in the dynein axonemal particle. Functionally, key assembly factor specifically required for the stability of axonemal dynein heavy chains in cytoplasm. The chain is Dynein axonemal assembly factor 10 from Homo sapiens (Human).